A 245-amino-acid polypeptide reads, in one-letter code: DNA repair protein RecO (245 aa).

Belongs to the RecO family.

In terms of biological role, involved in DNA repair and RecF pathway recombination. In Porphyromonas gingivalis (strain ATCC 33277 / DSM 20709 / CIP 103683 / JCM 12257 / NCTC 11834 / 2561), this protein is DNA repair protein RecO.